Consider the following 367-residue polypeptide: MDAQCSAKVNARKRRKEAPGPNGATEEDGVPSKVQRCAVGLRQPAPFSDEIEVDFSKPYVRVTMEEASRGTPCERPVRVYADGIFDLFHSGHARALMQAKNLFPNTYLIVGVCSDELTHNFKGFTVMNENERYDAVQHCRYVDEVVRNAPWTLTPEFLAEHRIDFVAHDDIPYSSAGSDDVYKHIKEAGMFAPTQRTEGISTSDIITRIVRDYDVYARRNLQRGYTAKELNVSFINEKKYHLQERVDKVKKKVKDVEEKSKEFVQKVEEKSIDLIQKWEEKSREFIGSFLEMFGPEGALKHMLKEGKGRMLQAISPKQSPSSSPTRERSPSPSFRWPFSGKTSPPCSPANLSRHKAAAYDISEDEED.

Met-1 bears the N-acetylmethionine mark. The disordered stretch occupies residues 1 to 33 (MDAQCSAKVNARKRRKEAPGPNGATEEDGVPSK). Lys-8 is subject to N6-acetyllysine. Residues Ile-84, Phe-85, His-92, and Lys-122 each coordinate CTP. Positions 122 and 151 each coordinate phosphocholine. CTP is bound by residues His-168, Asp-169, Tyr-173, Gln-195, Arg-196, Thr-197, and Ile-200. Amphipathic stretches follow at residues 228–287 (KELN…EFIG) and 298–315 (ALKHMLKEGKGRMLQAIS). Residue Ser-233 is modified to Phosphoserine. An autoinhibitory (AI) region spans residues 272–293 (IDLIQKWEEKSREFIGSFLEMF). The disordered stretch occupies residues 313–367 (AISPKQSPSSSPTRERSPSPSFRWPFSGKTSPPCSPANLSRHKAAAYDISEDEED). Phosphoserine occurs at positions 315, 319, 321, 322, and 323. Repeat unit 1 spans residues 319-324 (SPSSSP). Residues 319 to 339 (SPSSSPTRERSPSPSFRWPFS) are compositionally biased toward low complexity. Thr-325 carries the post-translational modification Phosphothreonine. A phosphoserine mark is found at Ser-329, Ser-331, and Ser-333. The stretch at 329–333 (SPSPS) is one 2; approximate repeat. A Phosphothreonine modification is found at Thr-342. Phosphoserine occurs at positions 343, 347, 352, and 362. Repeat 3 spans residues 343–348 (SPPCSP).

This sequence belongs to the cytidylyltransferase family. As to quaternary structure, homodimer. Post-translationally, the serine residues of the C-terminus are phosphorylated. The inactive soluble form is stabilized by phosphorylation, the active membrane bound form is promoted by anionic lipids or diacylglycerol, and is stabilized by dephosphorylation. Monoubiquitinated by the SCF(FBXL2) complex, leading to proteasomal degradation. Brain, placenta, liver, fetal and adult lung.

It is found in the cytoplasm. The protein resides in the cytosol. It localises to the membrane. Its subcellular location is the endoplasmic reticulum membrane. The protein localises to the nucleus. The catalysed reaction is phosphocholine + CTP + H(+) = CDP-choline + diphosphate. Its pathway is phospholipid metabolism; phosphatidylcholine biosynthesis; phosphatidylcholine from phosphocholine: step 1/2. Interconverts between an inactive cytosolic form and an active membrane-bound form. Activation involves disruption of an inhibitory interaction between helices at the base of the active site and the autoinhibitory (AI) region. Activated by anionic lipid vesicles and by oleic acid or diacylglycerol-containing phosphatidylcholine vesicles. In terms of biological role, catalyzes the key rate-limiting step in the CDP-choline pathway for phosphatidylcholine biosynthesis. The polypeptide is Choline-phosphate cytidylyltransferase A (PCYT1A) (Homo sapiens (Human)).